Consider the following 287-residue polypeptide: Festuclavine synthase II (287 aa).

The protein belongs to the fgaFS/easG family.

It carries out the reaction festuclavine + NAD(+) = 6,8-dimethyl-6,7-didehydroergoline + NADH + H(+). It functions in the pathway alkaloid biosynthesis; ergot alkaloid biosynthesis. In terms of biological role, festuclavine synthase; part of the gene cluster that mediates the biosynthesis of isofumigaclavines, fungal ergot alkaloids. The tryptophan dimethylallyltransferase ifgA catalyzes the first step of ergot alkaloid biosynthesis by condensing dimethylallyl diphosphate (DMAP) and tryptophan to form 4-dimethylallyl-L-tryptophan. The second step is catalyzed by the methyltransferase ifgB that methylates 4-dimethylallyl-L-tryptophan in the presence of S-adenosyl-L-methionine, resulting in the formation of N-methyl-dimethylallyl-L-tryptophan. The catalase ifgD and the FAD-dependent oxidoreductase ifgC then transform N-methyl-dimethylallyl-L-tryptophan to chanoclavine-I which is further oxidized by ifgE in the presence of NAD(+), resulting in the formation of chanoclavine-I aldehyde. The chanoclavine-I aldehyde reductases ifgG and/or fgaOx3 reduce chanoclavine-I aldehyde to dihydrochanoclavine-I aldehyde that spontaneously dehydrates to form 6,8-dimethyl-6,7-didehydroergoline. The festuclavine dehydrogenases ifgF1 and/or ifgF2 then catalyze the reduction of 6,8-dimethyl-6,7-didehydroergoline to form festuclavine. Hydrolysis of festuclavine by a yet undetermined cytochrome P450 monooxygenase (called ifgH) then leads to the formation of isofumigaclavine B which is in turn acetylated by ifgI to isofumigaclavine A. Penicillium roqueforti has interestingly at least two sets of genes for the consumption of chanoclavine-I aldehyde on three different loci, the OYEs ifgG/fgaOx3 and the festuclavine synthase homologs ifgF1/ifgF2. The reason for the duplication of these genes is unclear, probably to ensure the conversion of chanoclavine-I aldehyde by differential gene expression under various environmental conditions. The sequence is that of Festuclavine synthase II from Penicillium roqueforti (strain FM164).